Reading from the N-terminus, the 847-residue chain is Glycogen phosphorylase, liver form (847 aa).

Ala2 is modified (N-acetylalanine). Ser15 is subject to Phosphoserine; by PHK; in form phosphorylase a. AMP is bound by residues 43 to 45 (DRN), Tyr76, and Arg310. Lys364 bears the N6-succinyllysine mark. Lys470 is subject to N6-acetyllysine. Residues Ser524, Ser561, and Ser639 each carry the phosphoserine modification. Position 681 is an N6-(pyridoxal phosphate)lysine (Lys681). Lys796 is subject to N6-acetyllysine.

The protein belongs to the glycogen phosphorylase family. Homodimer; enzymatically active. Interacts with PPP1R3B; recruits the phosphatase PP1 which dephosphorylates and inactivates PYGL/glycogen phosphorylase. It depends on pyridoxal 5'-phosphate as a cofactor. Post-translationally, acetylation, which is up-regulated by glucose and insulin and down-regulated by glucagon, inhibits the glycogen phosphorylase activity by promoting PPP1R3B-mediated recruitment of phosphatase PP1 and Ser-15 dephosphorylation. In terms of processing, phosphorylation at Ser-15 converts inactive phosphorylase b into active phosphorylase a. Dephosphorylation of Ser-15 by phosphatase PP1 inactivates the enzyme.

It is found in the cytoplasm. The protein resides in the cytosol. It carries out the reaction [(1-&gt;4)-alpha-D-glucosyl](n) + phosphate = [(1-&gt;4)-alpha-D-glucosyl](n-1) + alpha-D-glucose 1-phosphate. With respect to regulation, allosterically regulated through the non-covalent binding of metabolites, being activated by AMP and inhibited by ATP, ADP, and glucose-6-phosphate. The activity is also controlled by post-translational modifications including phosphorylation and acetylation. Allosteric enzyme that catalyzes the rate-limiting step in glycogen catabolism, the phosphorolytic cleavage of glycogen to produce glucose-1-phosphate, and plays a central role in maintaining cellular and organismal glucose homeostasis. The sequence is that of Glycogen phosphorylase, liver form from Homo sapiens (Human).